Reading from the N-terminus, the 313-residue chain is tRNA dimethylallyltransferase (313 aa).

Residue 9 to 16 (GPTATGKS) participates in ATP binding. 11–16 (TATGKS) provides a ligand contact to substrate.

It belongs to the IPP transferase family. As to quaternary structure, monomer. Mg(2+) is required as a cofactor.

It carries out the reaction adenosine(37) in tRNA + dimethylallyl diphosphate = N(6)-dimethylallyladenosine(37) in tRNA + diphosphate. In terms of biological role, catalyzes the transfer of a dimethylallyl group onto the adenine at position 37 in tRNAs that read codons beginning with uridine, leading to the formation of N6-(dimethylallyl)adenosine (i(6)A). This chain is tRNA dimethylallyltransferase, found in Nocardia farcinica (strain IFM 10152).